Consider the following 633-residue polypeptide: MA3 DOMAIN-CONTAINING TRANSLATION REGULATORY FACTOR 4 (633 aa).

MI domains follow at residues Asp-56 to Lys-177, Glu-220 to Asp-341, Arg-351 to Asn-472, and Asp-514 to Ser-633. Positions Val-94–Ala-101 match the Nuclear localization signal 1 motif. The Nuclear localization signal 2 signature appears at Leu-389–Ala-396.

This sequence belongs to the PDCD4 family. Binds to EIF4A1. The association with ribosomes is modulated by cellular energy status and TOR activity. As to expression, mostly expressed, at low levels, in rosette leaves and flower buds, and, to a lower extent, in roots, stems, cauline leaves and flowers.

Its subcellular location is the nucleus. It localises to the cytoplasm. The protein localises to the cytosol. Its function is as follows. Involved in target of rapamycin (TOR)-regulated translation control, especially under energy-deficient conditions. This Arabidopsis thaliana (Mouse-ear cress) protein is MA3 DOMAIN-CONTAINING TRANSLATION REGULATORY FACTOR 4.